The sequence spans 649 residues: MSKFNLYSDYKPLGDQPKAIKSLVEHYKDGIKEQTLEGVTGSGKTFTMANVIEQLDKPTLVMSHNKTLAAQLYEEFKEFFPDNAVEYFVSYYDYYQPEAYVAQTDTFIDKESAINEEIDRLRHSATQSLLTRDDVIVVSSVSCIYGIGSPEDYAQFTLTLQTQQEISREDILKELVKMQYSRNDIEFIRGQFRVRGDVIEIFPINANYALRIELWGDEIDVIYKIDALKGDIIEELQKVIIFPAKHFVIAKEKQETAIANIKKELKERVDTFKATGKYVEAQRIEQRTNFDMEMLQEIGYCSGIENYSMHMNGRKWGETPYSLLRYFPDDYLTIIDESHVTVPQIRGMYEGDRARKENLIQYGFRLPSAKENRPLRFDEFMRAQNQVLYVSATPAAFELGRSKNKVEQIIRPTGLVDPEPIVRPIKNQVDDLLGEIRKCVDNNQRVLVTSLTKKMAEDLTDYYIKMNVKARYLHSEISTLERTEIIDELRRGDFDCLVGVNLLREGLDLPEVALVAILDADKEGFLRSQTSLIQTIGRAARNVNGRVILYADNITDSVRNAVNITKHRRKIQIAYNNDHNITPRSVVRKLKDKKIEEKVDDIQEIDNITTDEIDEIIKELEKEMKQAAKDLNFEKAAKLRDRIMELKEE.

In terms of domain architecture, Helicase ATP-binding spans glutamate 25–methionine 178. Glycine 38–threonine 45 lines the ATP pocket. Positions tyrosine 91–isoleucine 114 match the Beta-hairpin motif. The 167-residue stretch at glutamine 428–lysine 594 folds into the Helicase C-terminal domain. The region spanning aspartate 614–glutamate 649 is the UVR domain.

This sequence belongs to the UvrB family. In terms of assembly, forms a heterotetramer with UvrA during the search for lesions. Interacts with UvrC in an incision complex.

It is found in the cytoplasm. In terms of biological role, the UvrABC repair system catalyzes the recognition and processing of DNA lesions. A damage recognition complex composed of 2 UvrA and 2 UvrB subunits scans DNA for abnormalities. Upon binding of the UvrA(2)B(2) complex to a putative damaged site, the DNA wraps around one UvrB monomer. DNA wrap is dependent on ATP binding by UvrB and probably causes local melting of the DNA helix, facilitating insertion of UvrB beta-hairpin between the DNA strands. Then UvrB probes one DNA strand for the presence of a lesion. If a lesion is found the UvrA subunits dissociate and the UvrB-DNA preincision complex is formed. This complex is subsequently bound by UvrC and the second UvrB is released. If no lesion is found, the DNA wraps around the other UvrB subunit that will check the other stand for damage. The polypeptide is UvrABC system protein B (Methanosphaera stadtmanae (strain ATCC 43021 / DSM 3091 / JCM 11832 / MCB-3)).